The chain runs to 211 residues: Outer-membrane lipoprotein carrier protein (211 aa).

Positions Met1–Ala24 are cleaved as a signal peptide.

The protein belongs to the LolA family. Monomer.

Its subcellular location is the periplasm. Functionally, participates in the translocation of lipoproteins from the inner membrane to the outer membrane. Only forms a complex with a lipoprotein if the residue after the N-terminal Cys is not an aspartate (The Asp acts as a targeting signal to indicate that the lipoprotein should stay in the inner membrane). The polypeptide is Outer-membrane lipoprotein carrier protein (Cupriavidus taiwanensis (strain DSM 17343 / BCRC 17206 / CCUG 44338 / CIP 107171 / LMG 19424 / R1) (Ralstonia taiwanensis (strain LMG 19424))).